The primary structure comprises 105 residues: Endogenous retrovirus group K member 16 Rec protein (105 aa).

Residues 1 to 41 form a disordered region; the sequence is MNPSEMQRKAPPRRRRHRNRAPSSHKMNKMMMSEEQMKLPS. Basic residues predominate over residues 10 to 20; it reads APPRRRRHRNR. Positions 13 to 20 match the Nuclear localization signal motif; it reads RRRRHRNR. The Nuclear export signal signature appears at 50-59; the sequence is WAQLNKLTQL.

In terms of assembly, forms homodimers, homotrimers, and homotetramers via a C-terminal domain. Associates with XPO1 and with ZNF145.

It localises to the cytoplasm. Its subcellular location is the nucleus. The protein localises to the nucleolus. Its function is as follows. Retroviral replication requires the nuclear export and translation of unspliced, singly-spliced and multiply-spliced derivatives of the initial genomic transcript. Rec interacts with a highly structured RNA element (RcRE) present in the viral 3'LTR and recruits the cellular nuclear export machinery. This permits export to the cytoplasm of unspliced genomic or incompletely spliced subgenomic viral transcripts. This Homo sapiens (Human) protein is Endogenous retrovirus group K member 16 Rec protein (ERVK-16).